A 194-amino-acid chain; its full sequence is Peptidyl-tRNA hydrolase (194 aa).

Residue Tyr-16 coordinates tRNA. Residue His-21 is the Proton acceptor of the active site. TRNA contacts are provided by Phe-67, Asn-69, and Asn-115.

This sequence belongs to the PTH family. In terms of assembly, monomer.

It is found in the cytoplasm. The enzyme catalyses an N-acyl-L-alpha-aminoacyl-tRNA + H2O = an N-acyl-L-amino acid + a tRNA + H(+). Hydrolyzes ribosome-free peptidyl-tRNAs (with 1 or more amino acids incorporated), which drop off the ribosome during protein synthesis, or as a result of ribosome stalling. Its function is as follows. Catalyzes the release of premature peptidyl moieties from peptidyl-tRNA molecules trapped in stalled 50S ribosomal subunits, and thus maintains levels of free tRNAs and 50S ribosomes. In Escherichia fergusonii (strain ATCC 35469 / DSM 13698 / CCUG 18766 / IAM 14443 / JCM 21226 / LMG 7866 / NBRC 102419 / NCTC 12128 / CDC 0568-73), this protein is Peptidyl-tRNA hydrolase.